The sequence spans 303 residues: tRNA-cytidine(32) 2-sulfurtransferase (303 aa).

Positions 49 to 54 (SGGKDS) match the PP-loop motif motif. [4Fe-4S] cluster is bound by residues C124, C127, and C215.

It belongs to the TtcA family. In terms of assembly, homodimer. It depends on Mg(2+) as a cofactor. [4Fe-4S] cluster is required as a cofactor.

The protein localises to the cytoplasm. The catalysed reaction is cytidine(32) in tRNA + S-sulfanyl-L-cysteinyl-[cysteine desulfurase] + AH2 + ATP = 2-thiocytidine(32) in tRNA + L-cysteinyl-[cysteine desulfurase] + A + AMP + diphosphate + H(+). The protein operates within tRNA modification. Functionally, catalyzes the ATP-dependent 2-thiolation of cytidine in position 32 of tRNA, to form 2-thiocytidine (s(2)C32). The sulfur atoms are provided by the cysteine/cysteine desulfurase (IscS) system. In Anaeromyxobacter sp. (strain Fw109-5), this protein is tRNA-cytidine(32) 2-sulfurtransferase.